Here is a 443-residue protein sequence, read N- to C-terminus: Ribulose bisphosphate carboxylase large chain (443 aa).

Lysine 7 is subject to N6,N6,N6-trimethyllysine. Positions 116 and 166 each coordinate substrate. Lysine 168 functions as the Proton acceptor in the catalytic mechanism. Position 170 (lysine 170) interacts with substrate. Mg(2+)-binding residues include lysine 194, aspartate 196, and glutamate 197. Lysine 194 bears the N6-carboxylysine mark. The Proton acceptor role is filled by histidine 287. The substrate site is built by arginine 288, histidine 320, and serine 372.

It belongs to the RuBisCO large chain family. Type I subfamily. Heterohexadecamer of 8 large chains and 8 small chains; disulfide-linked. The disulfide link is formed within the large subunit homodimers. Requires Mg(2+) as cofactor. Post-translationally, the disulfide bond which can form in the large chain dimeric partners within the hexadecamer appears to be associated with oxidative stress and protein turnover.

The protein resides in the plastid. It is found in the chloroplast. It catalyses the reaction 2 (2R)-3-phosphoglycerate + 2 H(+) = D-ribulose 1,5-bisphosphate + CO2 + H2O. The enzyme catalyses D-ribulose 1,5-bisphosphate + O2 = 2-phosphoglycolate + (2R)-3-phosphoglycerate + 2 H(+). Functionally, ruBisCO catalyzes two reactions: the carboxylation of D-ribulose 1,5-bisphosphate, the primary event in carbon dioxide fixation, as well as the oxidative fragmentation of the pentose substrate in the photorespiration process. Both reactions occur simultaneously and in competition at the same active site. This is Ribulose bisphosphate carboxylase large chain from Abies homolepis (Nikko fir).